The sequence spans 166 residues: NADPH-dependent 7-cyano-7-deazaguanine reductase (166 aa).

Cys57 serves as the catalytic Thioimide intermediate. Asp64 functions as the Proton donor in the catalytic mechanism. Residues 79 to 81 (VES) and 98 to 99 (HE) contribute to the substrate site.

This sequence belongs to the GTP cyclohydrolase I family. QueF type 1 subfamily.

The protein localises to the cytoplasm. The enzyme catalyses 7-aminomethyl-7-carbaguanine + 2 NADP(+) = 7-cyano-7-deazaguanine + 2 NADPH + 3 H(+). It functions in the pathway tRNA modification; tRNA-queuosine biosynthesis. Its function is as follows. Catalyzes the NADPH-dependent reduction of 7-cyano-7-deazaguanine (preQ0) to 7-aminomethyl-7-deazaguanine (preQ1). This is NADPH-dependent 7-cyano-7-deazaguanine reductase from Staphylococcus aureus (strain JH1).